A 462-amino-acid chain; its full sequence is 3-isopropylmalate dehydratase large subunit (462 aa).

Residues cysteine 337, cysteine 397, and cysteine 400 each coordinate [4Fe-4S] cluster.

This sequence belongs to the aconitase/IPM isomerase family. LeuC type 1 subfamily. As to quaternary structure, heterodimer of LeuC and LeuD. [4Fe-4S] cluster serves as cofactor.

It carries out the reaction (2R,3S)-3-isopropylmalate = (2S)-2-isopropylmalate. It participates in amino-acid biosynthesis; L-leucine biosynthesis; L-leucine from 3-methyl-2-oxobutanoate: step 2/4. Catalyzes the isomerization between 2-isopropylmalate and 3-isopropylmalate, via the formation of 2-isopropylmaleate. The sequence is that of 3-isopropylmalate dehydratase large subunit from Listeria welshimeri serovar 6b (strain ATCC 35897 / DSM 20650 / CCUG 15529 / CIP 8149 / NCTC 11857 / SLCC 5334 / V8).